Consider the following 120-residue polypeptide: NADH-ubiquinone oxidoreductase chain 3 (120 aa).

3 consecutive transmembrane segments (helical) span residues 8-28 (YFIL…ISLL), 63-83 (FYLV…LFPW), and 90-110 (ISYF…IGFI).

Belongs to the complex I subunit 3 family.

The protein resides in the mitochondrion membrane. The catalysed reaction is a ubiquinone + NADH + 5 H(+)(in) = a ubiquinol + NAD(+) + 4 H(+)(out). Core subunit of the mitochondrial membrane respiratory chain NADH dehydrogenase (Complex I) that is believed to belong to the minimal assembly required for catalysis. Complex I functions in the transfer of electrons from NADH to the respiratory chain. The immediate electron acceptor for the enzyme is believed to be ubiquinone. This is NADH-ubiquinone oxidoreductase chain 3 (ND3) from Cyanidium caldarium (Red alga).